Consider the following 299-residue polypeptide: Phosphoribosylaminoimidazole-succinocarboxamide synthase (299 aa).

It belongs to the SAICAR synthetase family.

The enzyme catalyses 5-amino-1-(5-phospho-D-ribosyl)imidazole-4-carboxylate + L-aspartate + ATP = (2S)-2-[5-amino-1-(5-phospho-beta-D-ribosyl)imidazole-4-carboxamido]succinate + ADP + phosphate + 2 H(+). It participates in purine metabolism; IMP biosynthesis via de novo pathway; 5-amino-1-(5-phospho-D-ribosyl)imidazole-4-carboxamide from 5-amino-1-(5-phospho-D-ribosyl)imidazole-4-carboxylate: step 1/2. The protein is Phosphoribosylaminoimidazole-succinocarboxamide synthase of Desulfatibacillum aliphaticivorans.